The primary structure comprises 409 residues: Astacin-like metalloendopeptidase (409 aa).

A signal peptide spans 1–19; it reads MDLKMLLIFTAFLLPAVLG. A propeptide spanning residues 20–86 is cleaved from the precursor; sequence FPIQDNYENS…EGDIVPRRSR (67 aa). The segment covering 30 to 42 has biased composition (low complexity); that stretch reads TATSESTQVTTEE. The tract at residues 30-55 is disordered; it reads TATSESTQVTTEESIYDSPSPTETDS. The 199-residue stretch at 87-285 folds into the Peptidase M12A domain; that stretch reads SAFNCRNCYW…AKINKLYNCS (199 aa). 5 disulfide bridges follow: Cys91–Cys94, Cys134–Cys284, Cys155–Cys175, Cys287–Cys313, and Cys339–Cys362. Position 183 (His183) interacts with Zn(2+). The active site involves Glu184. Residues His187 and His193 each contribute to the Zn(2+) site. The CUB domain occupies 287-399; that stretch reads CSTIIDAAFG…SGFQATFTSA (113 aa).

Zn(2+) is required as a cofactor.

The protein resides in the cytoplasm. Its subcellular location is the cell membrane. It localises to the cytoplasmic vesicle. The protein localises to the secretory vesicle. It is found in the cortical granule. Functionally, probable oocyte-specific oolemmal receptor involved in sperm and egg adhesion and fertilization. Protease which may play a role in the breaking down of the vitelline membrane (days 0-5) and possibly, in the digestion of the egg white (days 9-12). The sequence is that of Astacin-like metalloendopeptidase from Coturnix japonica (Japanese quail).